We begin with the raw amino-acid sequence, 193 residues long: Holliday junction branch migration complex subunit RuvA (193 aa).

Positions 1-64 (MIGRIQGTLV…EDAQQLFGFA (64 aa)) are domain I. Residues 65–139 (TEIEREAFRQ…GKLAPDLGIT (75 aa)) are domain II. Positions 139–143 (TGGKP) are flexible linker. Residues 144 to 193 (QAIEATSEVLQALLSLGYSEKEALLALKQIPPETSVSDGIRMGLKYLSKP) form a domain III region.

Belongs to the RuvA family. As to quaternary structure, homotetramer. Forms an RuvA(8)-RuvB(12)-Holliday junction (HJ) complex. HJ DNA is sandwiched between 2 RuvA tetramers; dsDNA enters through RuvA and exits via RuvB. An RuvB hexamer assembles on each DNA strand where it exits the tetramer. Each RuvB hexamer is contacted by two RuvA subunits (via domain III) on 2 adjacent RuvB subunits; this complex drives branch migration. In the full resolvosome a probable DNA-RuvA(4)-RuvB(12)-RuvC(2) complex forms which resolves the HJ.

Its subcellular location is the cytoplasm. Its function is as follows. The RuvA-RuvB-RuvC complex processes Holliday junction (HJ) DNA during genetic recombination and DNA repair, while the RuvA-RuvB complex plays an important role in the rescue of blocked DNA replication forks via replication fork reversal (RFR). RuvA specifically binds to HJ cruciform DNA, conferring on it an open structure. The RuvB hexamer acts as an ATP-dependent pump, pulling dsDNA into and through the RuvAB complex. HJ branch migration allows RuvC to scan DNA until it finds its consensus sequence, where it cleaves and resolves the cruciform DNA. The sequence is that of Holliday junction branch migration complex subunit RuvA from Polynucleobacter asymbioticus (strain DSM 18221 / CIP 109841 / QLW-P1DMWA-1) (Polynucleobacter necessarius subsp. asymbioticus).